The following is a 490-amino-acid chain: Tektin-3 (490 aa).

3 O-linked (GalNAc...) threonine glycosylation sites follow: Thr7, Thr9, and Thr11. N-linked (GlcNAc...) asparagine glycosylation is found at Asn41, Asn86, Asn111, and Asn276. The stretch at 415-461 (MAQLRLVNEVYEVDETIQTLQQRLRDSEDTLQSLAHTKATLEHDLAV) forms a coiled coil.

The protein belongs to the tektin family. In terms of assembly, microtubule inner protein component of sperm flagellar doublet microtubules. Interacts with TEKT1, TEKT2, TEKT4 and TEKT5. Interacts with CCDC38. Post-translationally, N- and O-glycosylated. In terms of processing, ubiquitinated, leading to its degradation. Deubiquitinated by USP16, promoting its stability. May be proteolytically processed during the epididymal transit of spermatozoa. As to expression, expressed preferentially in testis. Expressed predominantly in late pachytene spermatocytes and early round spermatids. Expressed in spermatozoa.

Its subcellular location is the cytoplasm. The protein resides in the cytoskeleton. The protein localises to the cilium axoneme. It is found in the flagellum axoneme. It localises to the cytoplasmic vesicle. Its subcellular location is the secretory vesicle. The protein resides in the acrosome outer membrane. Functionally, microtubule inner protein (MIP) part of the dynein-decorated doublet microtubules (DMTs) in cilia and flagellar axoneme. Forms filamentous polymers in the walls of ciliary and flagellar microtubules. Required for normal sperm mobility. In Mus musculus (Mouse), this protein is Tektin-3 (Tekt3).